Reading from the N-terminus, the 397-residue chain is Serpin B10 (397 aa).

The Nuclear localization signal motif lies at 74-77 (KKRK).

It belongs to the serpin family. Ov-serpin subfamily.

It localises to the nucleus. It is found in the cytoplasm. Protease inhibitor that may play a role in the regulation of protease activities during hematopoiesis and apoptosis induced by TNF. May regulate protease activities in the cytoplasm and in the nucleus. The polypeptide is Serpin B10 (SERPINB10) (Rhinolophus ferrumequinum (Greater horseshoe bat)).